We begin with the raw amino-acid sequence, 374 residues long: MSNLSPDFVLPENFCANPQEAWTIPARFYTDQNAFEHEKENVFAKSWICVAHSSELANANDYVTREIIGESIVLVRGRDKVLRAFYNVCPHRGHQLLSGEGKAKNVITCPYHAWAFKLDGNLAHARNCENVANFDSDKAQLVPVRLEEYAGFVFINMDPNATSVEDQLPGLGAKVLEACPEVHDLKLAARFTTRTPANWKNIVDNYLECYHCGPAHPGFSDSVQVDRYWHTMHGNWTLQYGFAKPSEQSFKFEEGTDAAFHGFWLWPCTMLNVTPIKGMMTVIYEFPVDSETTLQNYDIYFTNEELTDEQKSLIEWYRDVFRPEDLRLVESVQKGLKSRGYRGQGRIMADSSGSGISEHGIAHFHNLLAQVFKD.

Residues 47 to 155 (WICVAHSSEL…LEEYAGFVFI (109 aa)) enclose the Rieske domain. Cysteine 89, histidine 91, cysteine 109, and histidine 112 together coordinate [2Fe-2S] cluster. Residues histidine 211, histidine 216, and aspartate 325 each contribute to the Fe cation site.

Belongs to the bacterial ring-hydroxylating dioxygenase alpha subunit family. CntA subfamily. In terms of assembly, composed of an oxygenase subunit and a reductase subunit. Requires [2Fe-2S] cluster as cofactor. The cofactor is Fe cation.

The catalysed reaction is (R)-carnitine + NADH + O2 + H(+) = (3R)-3-hydroxy-4-oxobutanoate + trimethylamine + NAD(+) + H2O. The enzyme catalyses (R)-carnitine + NADPH + O2 + H(+) = (3R)-3-hydroxy-4-oxobutanoate + trimethylamine + NADP(+) + H2O. It participates in amine and polyamine metabolism; carnitine metabolism. Converts carnitine to trimethylamine and malic semialdehyde. The chain is Carnitine monooxygenase oxygenase subunit (yeaW) from Escherichia coli O157:H7.